The sequence spans 334 residues: Geminin coiled-coil domain-containing protein 1 (334 aa).

The stretch at 82-119 (SQLYRNKQLQDTLVQKEEELARLHEENNHLRQYLNSAL) forms a coiled coil. The disordered stretch occupies residues 143-167 (FRKGKRKSKEQRYSPAEIPHPKNAK).

It belongs to the GEMC1 family. Post-translationally, highly phosphorylated by CDK2; stimulates initiation of DNA replication.

Its subcellular location is the nucleus. Its function is as follows. Regulator of DNA replication. Promotes initiation of chromosomal DNA replication by mediating TOPBP1- and CDK2-dependent recruitment of CDC45L onto replication origins. The protein is Geminin coiled-coil domain-containing protein 1 (GMNC) of Homo sapiens (Human).